The primary structure comprises 23 residues: Coenzyme PQQ synthesis protein A (23 aa).

Residues 15–19 constitute a cross-link (pyrroloquinoline quinone (Glu-Tyr)); that stretch reads EVTMY.

This sequence belongs to the PqqA family.

It functions in the pathway cofactor biosynthesis; pyrroloquinoline quinone biosynthesis. Required for coenzyme pyrroloquinoline quinone (PQQ) biosynthesis. PQQ is probably formed by cross-linking a specific glutamate to a specific tyrosine residue and excising these residues from the peptide. The polypeptide is Coenzyme PQQ synthesis protein A (Pseudomonas putida (strain W619)).